The primary structure comprises 714 residues: DNA ligase (714 aa).

NAD(+)-binding positions include 40 to 44 (DADYD), 90 to 91 (SL), and E124. Catalysis depends on K126, which acts as the N6-AMP-lysine intermediate. Residues R147, E183, K304, and K328 each contribute to the NAD(+) site. Zn(2+) contacts are provided by C420, C423, C438, and C444. In terms of domain architecture, BRCT spans 634–714 (TRDSEVSGKT…EWAAIVAAAG (81 aa)).

Belongs to the NAD-dependent DNA ligase family. LigA subfamily. Mg(2+) serves as cofactor. Requires Mn(2+) as cofactor.

The catalysed reaction is NAD(+) + (deoxyribonucleotide)n-3'-hydroxyl + 5'-phospho-(deoxyribonucleotide)m = (deoxyribonucleotide)n+m + AMP + beta-nicotinamide D-nucleotide.. DNA ligase that catalyzes the formation of phosphodiester linkages between 5'-phosphoryl and 3'-hydroxyl groups in double-stranded DNA using NAD as a coenzyme and as the energy source for the reaction. It is essential for DNA replication and repair of damaged DNA. The chain is DNA ligase from Sphingopyxis alaskensis (strain DSM 13593 / LMG 18877 / RB2256) (Sphingomonas alaskensis).